A 560-amino-acid chain; its full sequence is 2-succinyl-5-enolpyruvyl-6-hydroxy-3-cyclohexene-1-carboxylate synthase (560 aa).

Belongs to the TPP enzyme family. MenD subfamily. Homodimer. The cofactor is Mg(2+). It depends on Mn(2+) as a cofactor. Requires thiamine diphosphate as cofactor.

The enzyme catalyses isochorismate + 2-oxoglutarate + H(+) = 5-enolpyruvoyl-6-hydroxy-2-succinyl-cyclohex-3-ene-1-carboxylate + CO2. Its pathway is quinol/quinone metabolism; 1,4-dihydroxy-2-naphthoate biosynthesis; 1,4-dihydroxy-2-naphthoate from chorismate: step 2/7. It participates in quinol/quinone metabolism; menaquinone biosynthesis. Catalyzes the thiamine diphosphate-dependent decarboxylation of 2-oxoglutarate and the subsequent addition of the resulting succinic semialdehyde-thiamine pyrophosphate anion to isochorismate to yield 2-succinyl-5-enolpyruvyl-6-hydroxy-3-cyclohexene-1-carboxylate (SEPHCHC). The sequence is that of 2-succinyl-5-enolpyruvyl-6-hydroxy-3-cyclohexene-1-carboxylate synthase from Pectobacterium carotovorum subsp. carotovorum (strain PC1).